The sequence spans 265 residues: Isoprenyl transferase (265 aa).

Asp-35 is an active-site residue. Asp-35 lines the Mg(2+) pocket. Substrate is bound by residues 36 to 39, Trp-40, Arg-48, His-52, and 80 to 82; these read GNGR and SIE. The active-site Proton acceptor is the Asn-83. Residues Trp-84, Arg-86, Arg-203, and 209-211 contribute to the substrate site; that span reads RIS. Glu-222 is a binding site for Mg(2+).

The protein belongs to the UPP synthase family. In terms of assembly, homodimer. It depends on Mg(2+) as a cofactor.

Functionally, catalyzes the condensation of isopentenyl diphosphate (IPP) with allylic pyrophosphates generating different type of terpenoids. The chain is Isoprenyl transferase from Chlorobaculum tepidum (strain ATCC 49652 / DSM 12025 / NBRC 103806 / TLS) (Chlorobium tepidum).